The chain runs to 248 residues: Probable S-methyl-5'-thioinosine phosphorylase (248 aa).

Residues Thr12 and 54–55 (RH) each bind phosphate. Substrate is bound at residue Met187. Thr188 is a phosphate binding site. A substrate-binding site is contributed by 211 to 213 (NWA).

Belongs to the PNP/MTAP phosphorylase family. MTAP subfamily. As to quaternary structure, homotrimer.

It catalyses the reaction S-methyl-5'-thioinosine + phosphate = 5-(methylsulfanyl)-alpha-D-ribose 1-phosphate + hypoxanthine. The protein operates within purine metabolism; purine nucleoside salvage. In terms of biological role, catalyzes the reversible phosphorylation of S-methyl-5'-thioinosine (MTI) to hypoxanthine and 5-methylthioribose-1-phosphate. Involved in the breakdown of S-methyl-5'-thioadenosine (MTA), a major by-product of polyamine biosynthesis. Catabolism of (MTA) occurs via deamination to MTI and phosphorolysis to hypoxanthine. The chain is Probable S-methyl-5'-thioinosine phosphorylase from Xylella fastidiosa (strain Temecula1 / ATCC 700964).